A 226-amino-acid chain; its full sequence is ATP-dependent dethiobiotin synthetase BioD (226 aa).

Position 12-17 (12-17) interacts with ATP; sequence EVGKTV. Thr-16 is a binding site for Mg(2+). Lys-39 is an active-site residue. Thr-43 lines the substrate pocket. Residues Asp-47, 108 to 111, 168 to 169, and 200 to 202 contribute to the ATP site; these read EALG, NC, and PYI. 2 residues coordinate Mg(2+): Asp-47 and Glu-108.

The protein belongs to the dethiobiotin synthetase family. In terms of assembly, homodimer. The cofactor is Mg(2+).

It localises to the cytoplasm. It carries out the reaction (7R,8S)-7,8-diammoniononanoate + CO2 + ATP = (4R,5S)-dethiobiotin + ADP + phosphate + 3 H(+). The catalysed reaction is (7R,8S)-8-amino-7-(carboxyamino)nonanoate + ATP = (4R,5S)-dethiobiotin + ADP + phosphate + H(+). It participates in cofactor biosynthesis; biotin biosynthesis; biotin from 7,8-diaminononanoate: step 1/2. In terms of biological role, catalyzes a mechanistically unusual reaction, the ATP-dependent insertion of CO2 between the N7 and N8 nitrogen atoms of 7,8-diaminopelargonic acid (DAPA, also called 7,8-diammoniononanoate) to form a ureido ring. This cyanobacterium does not encode bioA (which catalyzes the formation of the precursor for this reaction in the cannonical pathway), instead it encodes bioU, which replaces bioA and also performs the first half of the cannonical BioD reaction. Thus in this organism BioD has a different substrate. This is ATP-dependent dethiobiotin synthetase BioD from Gloeothece citriformis (strain PCC 7424) (Cyanothece sp. (strain PCC 7424)).